The primary structure comprises 741 residues: NAD(P)H-quinone oxidoreductase subunit 5, chloroplastic (741 aa).

The next 16 helical transmembrane spans lie at tryptophan 9 to phenylalanine 29, tryptophan 40 to isoleucine 60, isoleucine 89 to isoleucine 109, phenylalanine 125 to isoleucine 145, isoleucine 147 to threonine 167, glycine 185 to phenylalanine 205, asparagine 219 to alanine 239, threonine 258 to alanine 278, histidine 289 to alanine 311, leucine 327 to isoleucine 347, alanine 354 to cysteine 374, asparagine 396 to serine 416, tryptophan 425 to tyrosine 445, leucine 549 to leucine 569, leucine 605 to valine 625, and tyrosine 721 to leucine 741.

This sequence belongs to the complex I subunit 5 family. NDH is composed of at least 16 different subunits, 5 of which are encoded in the nucleus.

The protein localises to the plastid. It is found in the chloroplast thylakoid membrane. The catalysed reaction is a plastoquinone + NADH + (n+1) H(+)(in) = a plastoquinol + NAD(+) + n H(+)(out). It catalyses the reaction a plastoquinone + NADPH + (n+1) H(+)(in) = a plastoquinol + NADP(+) + n H(+)(out). NDH shuttles electrons from NAD(P)H:plastoquinone, via FMN and iron-sulfur (Fe-S) centers, to quinones in the photosynthetic chain and possibly in a chloroplast respiratory chain. The immediate electron acceptor for the enzyme in this species is believed to be plastoquinone. Couples the redox reaction to proton translocation, and thus conserves the redox energy in a proton gradient. The polypeptide is NAD(P)H-quinone oxidoreductase subunit 5, chloroplastic (ndhF) (Symphyotrichum cordifolium (Heart-leaved aster)).